Consider the following 505-residue polypeptide: Cytochrome P450 monooxygenase efuB (505 aa).

Residues 12-34 form a helical membrane-spanning segment; it reads GFWPTVAGTVATYLFYQIVATVY. Cysteine 450 provides a ligand contact to heme.

It belongs to the cytochrome P450 family. Requires heme as cofactor.

It is found in the membrane. The protein operates within secondary metabolite biosynthesis; terpenoid biosynthesis. Its function is as follows. Cytochrome P450 monooxygenase; part of the gene cluster that mediates the biosynthesis of enfumafungin, a glycosylated fernene-type triterpenoid with potent antifungal activity, mediated by its interaction with beta-1,3-glucan synthase and the fungal cell wall. The pathway begins with the terpene cyclase-glycosyl transferase fusion protein that most likely uses 2,3-oxidosqualene as substrate and catalyzes glycosylation immediately after cyclization. The fernene glycoside then could be processed by the desaturase efuI which catalyzes isomerization of a double bond established by efuA to form the core structure. The latter would then undergo a series of hydroxylations in unknown order at C-2, C-19, C-23 and C-25, which would be catalyzed by two of the three cytochrome P450 monooxygenases efuB, efuG or efuH. The hydroxy-group at C-25 becomes oxidized by the dehydrogenase efuE to enable a spontaneous, non-enzymatic hemiacetal formation with C-23. After hydroxylation at C-2, acetylation by the acetyltransferase efuC takes place. The final steps in enfumafungin biosynthesis require expansion of the 5-membered ring by lactonization via a Baeyer-Villiger reaction mediated by one of the BGC's cytochrome P450 monooxygenases (efuB, efuG or efuH) followed by ring cleavage. This type of reaction would establish a double bond between C-20 and C-21 which could be reduced by the reductase efuL to form the final product. This Hormonema carpetanum protein is Cytochrome P450 monooxygenase efuB.